Consider the following 108-residue polypeptide: Beta-defensin 126 (108 aa).

The signal sequence occupies residues 1–20; it reads MKSLLFTLAVFMLLAQLVSG. Positions 21-63 are in vitro binds to LPS, mediates antimicrobial activity and inhibits LPS-mediated inflammation; sequence NWYVKKCLNDVGICKKKCKPGEMHIKNGWATCGKQRDCCVPAD. 3 disulfides stabilise this stretch: C27/C58, C34/C52, and C38/C59.

It belongs to the beta-defensin family. Homodimer or homooligomer; disulfide-linked. O-glycosylated; glycans contain alpha(2,3)-linked sialic acids.

The protein localises to the secreted. Highly glycosylated atypical beta-defensin involved in several aspects of sperm function. Facilitates sperm transport in the female reproductive tract and contributes to sperm protection against immunodetection; both functions are probably implicating the negative surface charge provided by its O-linked oligosaccharides in the sperm glycocalyx. Involved in binding of sperm to oviductal epithelial cells to form a sperm reservoir until ovulation. Release from the sperm surface during capacitation and ovaluation by an elevation of oviductal fluid pH is unmasking other surface components and allows sperm to penetrate the cumulus matrix and bind to the zona pellucida of the oocyte. In vitro has antimicrobial activity and may inhibit LPS-mediated inflammation. The chain is Beta-defensin 126 (DEFB126) from Pan troglodytes (Chimpanzee).